A 120-amino-acid polypeptide reads, in one-letter code: U13-lycotoxin-Ls1f (120 aa).

An N-terminal signal peptide occupies residues 1 to 19; it reads MKILFVLISILYAVYRFSS. Positions 20–54 are excised as a propeptide; that stretch reads EEDVDSAYLANELEPVEDINSEQYAALEPKEEQER. 4 disulfide bridges follow: Cys56-Cys70, Cys63-Cys76, Cys69-Cys87, and Cys78-Cys85. Positions 56–95 constitute an Agouti domain; sequence CAGMGQDCKDDCDCCLNIATCNCWFGRYFCSCTFGDYQTC.

It belongs to the neurotoxin 05 (agouti) family. Post-translationally, contains 6 disulfide bonds. Expressed by the venom gland.

The protein localises to the secreted. In Lycosa singoriensis (Wolf spider), this protein is U13-lycotoxin-Ls1f.